The following is a 216-amino-acid chain: Probable GTP-binding protein EngB (216 aa).

The 178-residue stretch at 37–214 folds into the EngB-type G domain; it reads GSVEIAFAGR…RAAMIRLLDE (178 aa). GTP is bound by residues 45-52, 72-76, 92-95, 159-162, and 193-195; these read GRSNVGKS, GRTQE, DMPG, TKAD, and TSS. Mg(2+) is bound by residues Ser52 and Thr74.

This sequence belongs to the TRAFAC class TrmE-Era-EngA-EngB-Septin-like GTPase superfamily. EngB GTPase family. It depends on Mg(2+) as a cofactor.

In terms of biological role, necessary for normal cell division and for the maintenance of normal septation. This chain is Probable GTP-binding protein EngB, found in Rhodopseudomonas palustris (strain ATCC BAA-98 / CGA009).